The primary structure comprises 216 residues: Large ribosomal subunit protein uL1A (216 aa).

2 positions are modified to phosphoserine: Ser-85 and Ser-128.

The protein belongs to the universal ribosomal protein uL1 family. In terms of assembly, component of the large ribosomal subunit (LSU). Mature yeast ribosomes consist of a small (40S) and a large (60S) subunit. The 40S small subunit contains 1 molecule of ribosomal RNA (18S rRNA) and at least 33 different proteins. The large 60S subunit contains 3 rRNA molecules (25S, 5.8S and 5S rRNA) and at least 46 different proteins. uL1 forms part of the L1 stalk.

The protein localises to the cytoplasm. Component of the ribosome, a large ribonucleoprotein complex responsible for the synthesis of proteins in the cell. The small ribosomal subunit (SSU) binds messenger RNAs (mRNAs) and translates the encoded message by selecting cognate aminoacyl-transfer RNA (tRNA) molecules. The large subunit (LSU) contains the ribosomal catalytic site termed the peptidyl transferase center (PTC), which catalyzes the formation of peptide bonds, thereby polymerizing the amino acids delivered by tRNAs into a polypeptide chain. The nascent polypeptides leave the ribosome through a tunnel in the LSU and interact with protein factors that function in enzymatic processing, targeting, and the membrane insertion of nascent chains at the exit of the ribosomal tunnel. uL1 forms part of the L1 stalk, a mobile element that plays a role in evacuating the exit-site tRNA. The chain is Large ribosomal subunit protein uL1A (rpl102) from Schizosaccharomyces pombe (strain 972 / ATCC 24843) (Fission yeast).